The chain runs to 417 residues: UDP-N-acetylglucosamine 1-carboxyvinyltransferase (417 aa).

Position 22 to 23 (22 to 23) interacts with phosphoenolpyruvate; that stretch reads KN. Residue Arg-93 coordinates UDP-N-acetyl-alpha-D-glucosamine. Cys-117 functions as the Proton donor in the catalytic mechanism. At Cys-117 the chain carries 2-(S-cysteinyl)pyruvic acid O-phosphothioketal. Residues 122-126, Asp-304, and Ile-326 each bind UDP-N-acetyl-alpha-D-glucosamine; that span reads RPVDQ.

This sequence belongs to the EPSP synthase family. MurA subfamily.

Its subcellular location is the cytoplasm. It catalyses the reaction phosphoenolpyruvate + UDP-N-acetyl-alpha-D-glucosamine = UDP-N-acetyl-3-O-(1-carboxyvinyl)-alpha-D-glucosamine + phosphate. Its pathway is cell wall biogenesis; peptidoglycan biosynthesis. Cell wall formation. Adds enolpyruvyl to UDP-N-acetylglucosamine. This Neisseria meningitidis serogroup A / serotype 4A (strain DSM 15465 / Z2491) protein is UDP-N-acetylglucosamine 1-carboxyvinyltransferase.